Here is a 254-residue protein sequence, read N- to C-terminus: Thiazole synthase (254 aa).

Lys96 (schiff-base intermediate with DXP) is an active-site residue. 1-deoxy-D-xylulose 5-phosphate-binding positions include Gly157, 183-184 (AG), and 205-206 (NT).

The protein belongs to the ThiG family. As to quaternary structure, homotetramer. Forms heterodimers with either ThiH or ThiS.

It is found in the cytoplasm. It carries out the reaction [ThiS sulfur-carrier protein]-C-terminal-Gly-aminoethanethioate + 2-iminoacetate + 1-deoxy-D-xylulose 5-phosphate = [ThiS sulfur-carrier protein]-C-terminal Gly-Gly + 2-[(2R,5Z)-2-carboxy-4-methylthiazol-5(2H)-ylidene]ethyl phosphate + 2 H2O + H(+). The protein operates within cofactor biosynthesis; thiamine diphosphate biosynthesis. Catalyzes the rearrangement of 1-deoxy-D-xylulose 5-phosphate (DXP) to produce the thiazole phosphate moiety of thiamine. Sulfur is provided by the thiocarboxylate moiety of the carrier protein ThiS. In vitro, sulfur can be provided by H(2)S. The protein is Thiazole synthase of Bacillus velezensis (strain DSM 23117 / BGSC 10A6 / LMG 26770 / FZB42) (Bacillus amyloliquefaciens subsp. plantarum).